The following is a 263-amino-acid chain: tRNA (guanine-N(1)-)-methyltransferase (263 aa).

S-adenosyl-L-methionine-binding positions include Gly-113 and 137-142 (LGDYVL).

This sequence belongs to the RNA methyltransferase TrmD family. As to quaternary structure, homodimer.

The protein localises to the cytoplasm. It catalyses the reaction guanosine(37) in tRNA + S-adenosyl-L-methionine = N(1)-methylguanosine(37) in tRNA + S-adenosyl-L-homocysteine + H(+). In terms of biological role, specifically methylates guanosine-37 in various tRNAs. The chain is tRNA (guanine-N(1)-)-methyltransferase from Renibacterium salmoninarum (strain ATCC 33209 / DSM 20767 / JCM 11484 / NBRC 15589 / NCIMB 2235).